Here is a 473-residue protein sequence, read N- to C-terminus: MDAQQGHTTTILMLPWVGYGHLLPFLELAKSLSRRKLFHIYFCSTSVSLDAIKPKLPPSISSDDSIQLVELRLPSSPELPPHLHTTNGLPSHLMPALHQAFVMAAQHFQVILQTLAPHLLIYDILQPWAPQVASSLNIPAINFSTTGASMLSRTLHPTHYPSSKFPISEFVLHNHWRAMYTTADGALTEEGHKIEETLANCLHTSCGVVLVNSFRELETKYIDYLSVLLNKKVVPVGPLVYEPNQEGEDEGYSSIKNWLDKKEPSSTVFVSFGTEYFPSKEEMEEIAYGLELSEVNFIWVLRFPQGDSTSTIEDALPKGFLERAGERAMVVKGWAPQAKILKHWSTGGLVSHCGWNSMMEGMMFGVPIIAVPMHLDQPFNAGLVEEAGVGVEAKRDSDGKIQREEVAKSIKEVVIEKTREDVRKKAREMDTKHGPTYFSRSKVSSFGRLYKINRPTTLTVGRFWSKQIKMKRE.

The active-site Proton acceptor is the H21. D123 serves as the catalytic Charge relay. 8 residues coordinate UDP-alpha-D-glucose: T274, Q337, W355, N356, S357, E360, D376, and Q377.

It belongs to the UDP-glycosyltransferase family. Highly expressed in mature fruits.

It carries out the reaction mogroside IIE + UDP-alpha-D-glucose = mogroside IIIX + UDP + H(+). The catalysed reaction is mogroside III + UDP-alpha-D-glucose = siamenoside I + UDP + H(+). It functions in the pathway secondary metabolite biosynthesis; terpenoid biosynthesis. In terms of biological role, UDP-glycosyltransferase involved in the biosynthesis of cucurbitacin and mogroside tetracyclic triterpene natural products (e.g. siamenoside I and mogrosides IV, V and VI). Cucurbitacins have cytotoxic properties and exhibit deterrent taste as a defense barrier against herbivores. Mogrosides are nonsugar highly oxygenated compounds used as high-intensity zero-calorie sweeteners; they also possess pharmacological properties such as regulating immunity, lowering blood sugar and lipid levels, protecting the liver, and acting as antioxidants and antitumor agents. Catalyzes the branched glucosylations of mogroside II-E and mogroside III. This is Mogroside IIIx synthase from Siraitia grosvenorii (Monk's fruit).